We begin with the raw amino-acid sequence, 326 residues long: Probable GTP 3',8-cyclase (326 aa).

The Radical SAM core domain occupies Leu-6–Gln-235. A GTP-binding site is contributed by Arg-15. 3 residues coordinate [4Fe-4S] cluster: Cys-22, Cys-26, and Cys-29. Residue Lys-62 coordinates GTP. Residue Gly-66 coordinates S-adenosyl-L-methionine. Thr-92 serves as a coordination point for GTP. Residue Ser-116 coordinates S-adenosyl-L-methionine. Lys-153 contacts GTP. Residues Cys-253 and Cys-256 each contribute to the [4Fe-4S] cluster site. GTP is bound at residue Arg-258–Arg-260. A [4Fe-4S] cluster-binding site is contributed by Cys-270.

It belongs to the radical SAM superfamily. MoaA family. [4Fe-4S] cluster is required as a cofactor.

The catalysed reaction is GTP + AH2 + S-adenosyl-L-methionine = (8S)-3',8-cyclo-7,8-dihydroguanosine 5'-triphosphate + 5'-deoxyadenosine + L-methionine + A + H(+). It functions in the pathway cofactor biosynthesis; molybdopterin biosynthesis. In terms of biological role, catalyzes the cyclization of GTP to (8S)-3',8-cyclo-7,8-dihydroguanosine 5'-triphosphate. In Thermoplasma volcanium (strain ATCC 51530 / DSM 4299 / JCM 9571 / NBRC 15438 / GSS1), this protein is Probable GTP 3',8-cyclase.